Here is a 408-residue protein sequence, read N- to C-terminus: Argininosuccinate synthase (408 aa).

Residues 11–19 (AYSGGLDTS) and Ala-38 each bind ATP. 2 residues coordinate L-citrulline: Tyr-91 and Ser-96. Gly-121 is a binding site for ATP. L-aspartate-binding residues include Thr-123, Asn-127, and Asp-128. Asn-127 provides a ligand contact to L-citrulline. L-citrulline is bound by residues Arg-131, Ser-182, Ser-191, Glu-267, and Tyr-279.

This sequence belongs to the argininosuccinate synthase family. Type 1 subfamily. In terms of assembly, homotetramer.

The protein localises to the cytoplasm. The catalysed reaction is L-citrulline + L-aspartate + ATP = 2-(N(omega)-L-arginino)succinate + AMP + diphosphate + H(+). The protein operates within amino-acid biosynthesis; L-arginine biosynthesis; L-arginine from L-ornithine and carbamoyl phosphate: step 2/3. In Paracoccus denitrificans (strain Pd 1222), this protein is Argininosuccinate synthase.